The sequence spans 369 residues: Endophilin-A (369 aa).

The region spanning 18–248 (TEKMGGAEGT…LQEKRSEAES (231 aa)) is the BAR domain. Positions 227–247 (QCADVLRGLQETLQEKRSEAE) form a coiled coil. Low complexity predominate over residues 275-294 (GTPSHISSSASPLPSPMRSP). Residues 275 to 296 (GTPSHISSSASPLPSPMRSPAK) are disordered. Positions 305-364 (QQQPCCQALYDFDPENPGELGFKENDIITLLNRVDDNWYEGAVNGRTGYFPQSYVQVQVP) constitute an SH3 domain.

Belongs to the endophilin family.

It localises to the cytoplasm. Its subcellular location is the membrane. Required presynaptically at the neuromuscular junction. Implicated in synaptic vesicle endocytosis. The chain is Endophilin-A from Drosophila pseudoobscura pseudoobscura (Fruit fly).